A 529-amino-acid polypeptide reads, in one-letter code: Kunitz-type protease inhibitor 1 (529 aa).

The signal sequence occupies residues 1–35 (MAPARTMARARLAPAGIPAVALWLLCTLGLQGTQA). Residues 57 to 140 (GVPGFVLDTN…FAPREGFINY (84 aa)) form the MANSC domain. N66 and N235 each carry an N-linked (GlcNAc...) asparagine glycan. The BPTI/Kunitz inhibitor 1 domain occupies 250–300 (CLASNKVGRCRGSFPRWYYDPTEQICKSFVYGGCLGNKNNYLREEECILAC). Intrachain disulfides connect C250–C300, C259–C283, C275–C296, C335–C347, C342–C360, C354–C369, C391–C441, C400–C424, and C416–C437. One can recognise an LDL-receptor class A domain in the interval 334-370 (TCQPTQFRCSNGCCIDSFLECDDTPNCPDASDEAACE). The BPTI/Kunitz inhibitor 2 domain maps to 391–441 (CVDLPDTGLCKESIPRWYYNPFSEHCARFTYGGCYGNKNNFEEEQQCLESC). Residue N523 is glycosylated (N-linked (GlcNAc...) asparagine).

In terms of assembly, interacts with HGFAC. Interacts with TMPRSS13; the interaction promotes the phosphorylation and cell membrane localization of TMPRSS13.

The protein resides in the secreted. Its subcellular location is the cytoplasm. The protein localises to the cell membrane. Functionally, inhibitor of HGFAC. Inhibits serine protease activity of ST14/matriptase in vitro. Inhibits serine protease activity of TMPRSS13, via the BPTI/Kunitz inhibitor 1 domain. The sequence is that of Kunitz-type protease inhibitor 1 (SPINT1) from Homo sapiens (Human).